A 330-amino-acid chain; its full sequence is Aspartate--ammonia ligase (330 aa).

The protein belongs to the class-II aminoacyl-tRNA synthetase family. AsnA subfamily. Homodimer.

Its subcellular location is the cytoplasm. The catalysed reaction is L-aspartate + NH4(+) + ATP = L-asparagine + AMP + diphosphate + H(+). Its pathway is amino-acid biosynthesis; L-asparagine biosynthesis; L-asparagine from L-aspartate (ammonia route): step 1/1. This is Aspartate--ammonia ligase from Salmonella typhi.